The following is a 97-amino-acid chain: Aspartyl/glutamyl-tRNA(Asn/Gln) amidotransferase subunit C (97 aa).

This sequence belongs to the GatC family. As to quaternary structure, heterotrimer of A, B and C subunits.

The catalysed reaction is L-glutamyl-tRNA(Gln) + L-glutamine + ATP + H2O = L-glutaminyl-tRNA(Gln) + L-glutamate + ADP + phosphate + H(+). It carries out the reaction L-aspartyl-tRNA(Asn) + L-glutamine + ATP + H2O = L-asparaginyl-tRNA(Asn) + L-glutamate + ADP + phosphate + 2 H(+). Functionally, allows the formation of correctly charged Asn-tRNA(Asn) or Gln-tRNA(Gln) through the transamidation of misacylated Asp-tRNA(Asn) or Glu-tRNA(Gln) in organisms which lack either or both of asparaginyl-tRNA or glutaminyl-tRNA synthetases. The reaction takes place in the presence of glutamine and ATP through an activated phospho-Asp-tRNA(Asn) or phospho-Glu-tRNA(Gln). The polypeptide is Aspartyl/glutamyl-tRNA(Asn/Gln) amidotransferase subunit C (Prochlorococcus marinus subsp. pastoris (strain CCMP1986 / NIES-2087 / MED4)).